The sequence spans 118 residues: Large ribosomal subunit protein bL17 (118 aa).

It belongs to the bacterial ribosomal protein bL17 family. In terms of assembly, part of the 50S ribosomal subunit. Contacts protein L32.

This chain is Large ribosomal subunit protein bL17, found in Thermus thermophilus (strain ATCC BAA-163 / DSM 7039 / HB27).